A 406-amino-acid polypeptide reads, in one-letter code: MAKGEFIRTKPHVNVGTIGHVDHGKTTLTAALTFVTAAENPNVEVKDYGDIDKAPEERARGITINTAHVEYETAKRHYSHVDCPGHADYIKNMITGAAQMDGAILVVSAADGPMPQTREHILLARQVGVPYIVVFMNKVDMVDDPELLDLVEMEVRDLLNQYEFPGDEVPVIRGSALLALEQMHRNPKTRRGENEWVDKIWELLDAIDEYIPTPVRDVDKPFLMPVEDVFTITGRGTVATGRIERGKVKVGDEVEIVGLAPETRKTVVTGVEMHRKTLQEGIAGDNVGVLLRGVSREEVERGQVLAKPGSITPHTKFEASVYVLKKEEGGRHTGFFSGYRPQFYFRTTDVTGVVQLPPGVEMVMPGDNVTFTVELIKPVALEEGLRFAIREGGRTVGAGVVTKILE.

A tr-type G domain is found at 10–215 (KPHVNVGTIG…AIDEYIPTPV (206 aa)). Positions 19–26 (GHVDHGKT) are G1. Residue 19-26 (GHVDHGKT) participates in GTP binding. Position 26 (Thr-26) interacts with Mg(2+). The interval 61 to 65 (GITIN) is G2. Residues 82 to 85 (DCPG) are G3. GTP contacts are provided by residues 82 to 86 (DCPGH) and 137 to 140 (NKVD). The interval 137-140 (NKVD) is G4. A G5 region spans residues 175–177 (SAL). Thr-395 is modified (phosphothreonine).

The protein belongs to the TRAFAC class translation factor GTPase superfamily. Classic translation factor GTPase family. EF-Tu/EF-1A subfamily. In terms of assembly, monomer. Post-translationally, phosphorylated on a threonine.

It localises to the cytoplasm. The catalysed reaction is GTP + H2O = GDP + phosphate + H(+). Functionally, GTP hydrolase that promotes the GTP-dependent binding of aminoacyl-tRNA to the A-site of ribosomes during protein biosynthesis. In terms of biological role, protects glycyl-tRNA(Gly) from hydrolysis by E.coli D-aminoacyl-tRNA deacylase (dtd). The sequence is that of Elongation factor Tu-B from Thermus thermophilus (strain ATCC 27634 / DSM 579 / HB8).